The chain runs to 100 residues: Urease subunit gamma (100 aa).

This sequence belongs to the urease gamma subunit family. As to quaternary structure, heterotrimer of UreA (gamma), UreB (beta) and UreC (alpha) subunits. Three heterotrimers associate to form the active enzyme.

The protein resides in the cytoplasm. The enzyme catalyses urea + 2 H2O + H(+) = hydrogencarbonate + 2 NH4(+). It participates in nitrogen metabolism; urea degradation; CO(2) and NH(3) from urea (urease route): step 1/1. The sequence is that of Urease subunit gamma from Staphylococcus aureus (strain N315).